Reading from the N-terminus, the 74-residue chain is RNA-binding protein Hfq (74 aa).

Residues 9 to 69 (DQFLNQLRKE…ISTFVPQKNV (61 aa)) form the Sm domain.

Belongs to the Hfq family. As to quaternary structure, homohexamer.

Its function is as follows. RNA chaperone that binds small regulatory RNA (sRNAs) and mRNAs to facilitate mRNA translational regulation in response to envelope stress, environmental stress and changes in metabolite concentrations. Also binds with high specificity to tRNAs. This is RNA-binding protein Hfq from Bacillus cereus (strain Q1).